We begin with the raw amino-acid sequence, 129 residues long: Follitropin subunit beta (129 aa).

An N-terminal signal peptide occupies residues 1–20 (MKSLQFCFLFCCWKAICCNS). Cystine bridges form between C21–C69, C35–C84, C38–C122, C46–C100, C50–C102, and C105–C112. Residues N25 and N42 are each glycosylated (N-linked (GlcNAc...) asparagine).

The protein belongs to the glycoprotein hormones subunit beta family. In terms of assembly, heterodimer. The active follitropin is a heterodimer composed of an alpha chain/CGA shared with other hormones and a unique beta chain/FSHB shown here.

The protein resides in the secreted. Functionally, together with the alpha chain CGA constitutes follitropin, the follicle-stimulating hormone, and provides its biological specificity to the hormone heterodimer. Binds FSHR, a G protein-coupled receptor, on target cells to activate downstream signaling pathways. Follitropin is involved in follicle development and spermatogenesis in reproductive organs. This Sus scrofa (Pig) protein is Follitropin subunit beta (FSHB).